We begin with the raw amino-acid sequence, 373 residues long: Putative glutamate--cysteine ligase 2 (373 aa).

The protein belongs to the glutamate--cysteine ligase type 2 family. YbdK subfamily. In terms of assembly, homodimer.

It carries out the reaction L-cysteine + L-glutamate + ATP = gamma-L-glutamyl-L-cysteine + ADP + phosphate + H(+). Its function is as follows. ATP-dependent carboxylate-amine ligase which exhibits weak glutamate--cysteine ligase activity. This is Putative glutamate--cysteine ligase 2 from Enterobacter sp. (strain 638).